Consider the following 532-residue polypeptide: uncharacterized protein (532 aa).

Helical transmembrane passes span 25 to 45 (ITKI…GDVG), 65 to 85 (SGFP…NHHT), 109 to 129 (AVPI…QVAA), 134 to 154 (LFPF…MLPS), 179 to 199 (KGAS…AGSL), 203 to 223 (IILG…RQNE), 248 to 268 (LLLF…SGGE), 302 to 322 (VPYI…EKIT), 344 to 364 (KPVN…QVFS), 371 to 391 (SLAV…FPAI), 392 to 412 (AVGA…PRYG), 425 to 445 (AAVA…DKLR), 459 to 479 (SAVL…TGRG), and 494 to 514 (AVFI…LNSV).

This sequence belongs to the polysaccharide synthase family.

It is found in the cell membrane. This is an uncharacterized protein from Bacillus subtilis (strain 168).